A 347-amino-acid polypeptide reads, in one-letter code: 2-hydroxyacid dehydrogenase A (347 aa).

Residues 157–158 (RI), Asp177, 234–236 (TSR), and Asp260 each bind NAD(+). Arg236 is an active-site residue. Glu265 is a catalytic residue.

It belongs to the D-isomer specific 2-hydroxyacid dehydrogenase family.

The enzyme catalyses a (2R)-2-hydroxycarboxylate + NADP(+) = a 2-oxocarboxylate + NADPH + H(+). 2-hydroxyacid dehydrogenase that is capable to reduce pyruvate, hydroxypyruvate and glyoxylate in a NADPH- or NADH-dependent manner. In contrast to 2-HadhD/morA, does not recognize 4-methyl-2-oxopentanoate (MOA) as a substrate. The chain is 2-hydroxyacid dehydrogenase A from Aspergillus oryzae (strain ATCC 42149 / RIB 40) (Yellow koji mold).